The sequence spans 341 residues: Phosphatidylserine decarboxylase proenzyme (341 aa).

Catalysis depends on charge relay system; for autoendoproteolytic cleavage activity residues Asp-90, His-147, and Ser-254. Ser-254 acts as the Schiff-base intermediate with substrate; via pyruvic acid; for decarboxylase activity in catalysis. Ser-254 carries the post-translational modification Pyruvic acid (Ser); by autocatalysis. Positions 287 to 341 (RQDEQTPVVFPEGTELEENDAAQPPVAATSEPVQADGQNPAAEVSGQTGHKPDAP) are disordered.

This sequence belongs to the phosphatidylserine decarboxylase family. PSD-B subfamily. Prokaryotic type I sub-subfamily. Heterodimer of a large membrane-associated beta subunit and a small pyruvoyl-containing alpha subunit. Pyruvate is required as a cofactor. Is synthesized initially as an inactive proenzyme. Formation of the active enzyme involves a self-maturation process in which the active site pyruvoyl group is generated from an internal serine residue via an autocatalytic post-translational modification. Two non-identical subunits are generated from the proenzyme in this reaction, and the pyruvate is formed at the N-terminus of the alpha chain, which is derived from the carboxyl end of the proenzyme. The autoendoproteolytic cleavage occurs by a canonical serine protease mechanism, in which the side chain hydroxyl group of the serine supplies its oxygen atom to form the C-terminus of the beta chain, while the remainder of the serine residue undergoes an oxidative deamination to produce ammonia and the pyruvoyl prosthetic group on the alpha chain. During this reaction, the Ser that is part of the protease active site of the proenzyme becomes the pyruvoyl prosthetic group, which constitutes an essential element of the active site of the mature decarboxylase.

The protein resides in the cell membrane. The enzyme catalyses a 1,2-diacyl-sn-glycero-3-phospho-L-serine + H(+) = a 1,2-diacyl-sn-glycero-3-phosphoethanolamine + CO2. The protein operates within phospholipid metabolism; phosphatidylethanolamine biosynthesis; phosphatidylethanolamine from CDP-diacylglycerol: step 2/2. Its function is as follows. Catalyzes the formation of phosphatidylethanolamine (PtdEtn) from phosphatidylserine (PtdSer). This chain is Phosphatidylserine decarboxylase proenzyme, found in Pectobacterium atrosepticum (strain SCRI 1043 / ATCC BAA-672) (Erwinia carotovora subsp. atroseptica).